The chain runs to 434 residues: GTPase Obg (434 aa).

The region spanning 1–158 (MFLDTAKIKV…RELQLELKIL (158 aa)) is the Obg domain. Residues 159–336 (ADVGLVGFPS…LLDATAELLD (178 aa)) form the OBG-type G domain. GTP is bound by residues 165-172 (GFPSVGKS), 190-194 (FTTIV), 212-215 (DLPG), 282-285 (NKMD), and 317-319 (SGL). Mg(2+)-binding residues include Ser172 and Thr192. Positions 356–434 (GFDEEEKAFE…IGKFEFEFVD (79 aa)) constitute an OCT domain.

Belongs to the TRAFAC class OBG-HflX-like GTPase superfamily. OBG GTPase family. As to quaternary structure, monomer. Mg(2+) is required as a cofactor.

The protein resides in the cytoplasm. Functionally, an essential GTPase which binds GTP, GDP and possibly (p)ppGpp with moderate affinity, with high nucleotide exchange rates and a fairly low GTP hydrolysis rate. Plays a role in control of the cell cycle, stress response, ribosome biogenesis and in those bacteria that undergo differentiation, in morphogenesis control. In Streptococcus pneumoniae serotype 19F (strain G54), this protein is GTPase Obg.